Here is a 113-residue protein sequence, read N- to C-terminus: MLTGVLVLKSAALFVLAALLEIGGAWLVWQGVREHRGWIWAGAGVIALGAYGFVAAFQPDAHFGRILAAYGGVFVAGSLLWGVVVDGFRPDRWDLTGALVCLVGVGLIMYAPR.

Transmembrane regions (helical) follow at residues 12–32, 37–57, 66–86, and 92–112; these read ALFV…WQGV, GWIW…VAAF, ILAA…VVVD, and RWDL…MYAP.

The protein belongs to the UPF0060 family.

Its subcellular location is the cell membrane. The protein is UPF0060 membrane protein Mmcs_2513 of Mycobacterium sp. (strain MCS).